We begin with the raw amino-acid sequence, 588 residues long: Protein disulfide-isomerase-like protein of the testis (588 aa).

Residues 1–20 (MELLWTPLLLVAACLSEVLG) form the signal peptide. N-linked (GlcNAc...) asparagine glycosylation is found at asparagine 55, asparagine 157, and asparagine 337. The 64-residue stretch at 385 to 448 (PVKKLVGKNF…IAKIDITAND (64 aa)) folds into the Thioredoxin domain. Basic and acidic residues-rich tracts occupy residues 531 to 542 (IEDTSKQDRPVK), 549 to 567 (SIRK…EREA), and 574 to 588 (EQPK…KEEL). The disordered stretch occupies residues 531-588 (IEDTSKQDRPVKESPVLDSIRKPEEPERRKETAEREAAAAQPKEQPKPERKLEVKEEL). Positions 585–588 (KEEL) match the Prevents secretion from ER motif.

This sequence belongs to the protein disulfide isomerase family. Homodimer. The homodimer is not disulfide-linked. Interacts with CLGN and ERO1A. N-glycosylated. As to expression, testis-specific (at protein level).

The protein localises to the endoplasmic reticulum. Its function is as follows. Probable redox-inactive chaperone involved in spermatogenesis. The sequence is that of Protein disulfide-isomerase-like protein of the testis (Pdilt) from Mus musculus (Mouse).